Here is a 634-residue protein sequence, read N- to C-terminus: 1-deoxy-D-xylulose-5-phosphate synthase (634 aa).

Thiamine diphosphate contacts are provided by residues histidine 74 and 115–117 (AHS). Aspartate 146 lines the Mg(2+) pocket. Residues 147 to 148 (GA), asparagine 176, tyrosine 283, and glutamate 365 each bind thiamine diphosphate. Asparagine 176 contributes to the Mg(2+) binding site.

Belongs to the transketolase family. DXPS subfamily. In terms of assembly, homodimer. It depends on Mg(2+) as a cofactor. Thiamine diphosphate serves as cofactor.

The catalysed reaction is D-glyceraldehyde 3-phosphate + pyruvate + H(+) = 1-deoxy-D-xylulose 5-phosphate + CO2. The protein operates within metabolic intermediate biosynthesis; 1-deoxy-D-xylulose 5-phosphate biosynthesis; 1-deoxy-D-xylulose 5-phosphate from D-glyceraldehyde 3-phosphate and pyruvate: step 1/1. Catalyzes the acyloin condensation reaction between C atoms 2 and 3 of pyruvate and glyceraldehyde 3-phosphate to yield 1-deoxy-D-xylulose-5-phosphate (DXP). The sequence is that of 1-deoxy-D-xylulose-5-phosphate synthase from Burkholderia lata (strain ATCC 17760 / DSM 23089 / LMG 22485 / NCIMB 9086 / R18194 / 383).